Reading from the N-terminus, the 828-residue chain is MHFAKLDDSPMFRQQMQSMEESAELLRLRCLRFYKGCRKYTEGLGEGYDADIGFVNALESFGGGHNDPVCVAFGGPVMTKFTIALREIGTYKEVLRSQVEHMLSDRLLQFVNGDVHEVKEARKRFDKATITYDQAREKYLSLRKSTRLDVAATIEEDLHSARTTFEQARFHLVSALSNAESKKRFEFLEAVSGTMDAHLRFFKQGYELLHQMEPFINQVLAYAHQSRECANYEMASLNERMQEYQRQVDRETRNSCVSPTGDGMRHNSRNSQKVIEAVMQSAAKGKVQTIRQGYLSKRSSNLRGDWKRRFFILDSRGMLYYYRKPWNWSSGNGSRSVVHRNMASENSPGLLSRWLSSHYHGGVHDEKPVARHTVNLLTSTIKVDADQTDLRFCFRIISPTKVYTLQAENAQDQMDWIEKITGVIASLLSFQTPERAIMRLSTVDGGDTFSASDSGSLADPYDIEQAESGESTVEHPMTGGNRSRFSGCLQQHDMVKTEKPIDVLTRVLGNERCADCGAPEPDWASLNLGVLICIECSGIHRNLGVHISKVRSLTLDVKVWEPSVLTLFQSLGNVYVNSVWEELLNSESRTSSASRSSGTPKSDRPRKLLVRKPGFNDPISVKELFIHAKYSERIFVRKAIDSQHFQAVFQEIWENVRANDKKSVYRHIVCSEADVNALRGQASYTVSLPLSKMMQMEETLEAKFKSIEEEFQENPAGYSNSRGDGESMVREETSNDCSLLHLACLSADIGMVELLLQYGAKINATDSKGRTPLHHCIISRRYAIARLLLMRGGDPNAVDKDSNIPVKYASQTDLNDSELIALLTDSKR.

One can recognise a BAR domain in the interval 1 to 225 (MHFAKLDDSP…INQVLAYAHQ (225 aa)). Positions 225-255 (QSRECANYEMASLNERMQEYQRQVDRETRNS) form a coiled coil. The disordered stretch occupies residues 247-268 (QVDRETRNSCVSPTGDGMRHNS). Positions 288–425 (QTIRQGYLSK…WIEKITGVIA (138 aa)) constitute a PH domain. Phosphoserine is present on Ser-441. An Arf-GAP domain is found at 498–643 (EKPIDVLTRV…IFVRKAIDSQ (146 aa)). The C4-type zinc finger occupies 513 to 536 (CADCGAPEPDWASLNLGVLICIEC). The span at 590–600 (TSSASRSSGTP) shows a compositional bias: low complexity. A disordered region spans residues 590–611 (TSSASRSSGTPKSDRPRKLLVR). 2 ANK repeats span residues 735–764 (NDCS…KINA) and 768–797 (KGRT…DPNA).

Expressed in roots, but not in hypocotyls or cotyledons. Low levels detected in leaf and shoot apical meristems and in siliques.

It localises to the endosome. Probable GTPase-activating protein. Regulator of membrane trafficking. Required for maintaining a straight growth of root hairs. This is ADP-ribosylation factor GTPase-activating protein AGD1 (AGD1) from Arabidopsis thaliana (Mouse-ear cress).